Consider the following 228-residue polypeptide: FCS-Like Zinc finger 12 (228 aa).

Residues 162–205 form an FLZ-type zinc finger; the sequence is DFLTSCCLCKKKLQGKDIYMYKGDEGFCSKECRSLKIMEDSLKE.

Belongs to the FLZ family. Interacts with KIN10 and KIN11 via its FLZ-type zinc finger domain. Interacts with KINB1 and KINB2 via its N-terminal part. Forms homodimer and heterodimer with FLZ2 and FLZ10 in vitro.

Functionally, may act as an adapter to facilitate the interaction of SnRK1 complex with effector proteins, conferring tissue- and stimulus-type specific differences in the SnRK1 regulation pathway. This chain is FCS-Like Zinc finger 12, found in Arabidopsis thaliana (Mouse-ear cress).